The primary structure comprises 397 residues: Cytoplasmic tRNA 2-thiolation protein 2 (397 aa).

This sequence belongs to the CTU2/NCS2 family.

Its subcellular location is the cytoplasm. The protein operates within tRNA modification; 5-methoxycarbonylmethyl-2-thiouridine-tRNA biosynthesis. In terms of biological role, plays a central role in 2-thiolation of mcm(5)S(2)U at tRNA wobble positions of tRNA(Lys), tRNA(Glu) and tRNA(Gln). May act by forming a heterodimer with NCS6/CTU1 that ligates sulfur from thiocarboxylated URM1 onto the uridine of tRNAs at wobble position. The sequence is that of Cytoplasmic tRNA 2-thiolation protein 2 from Drosophila grimshawi (Hawaiian fruit fly).